Reading from the N-terminus, the 85-residue chain is Putative transmembrane protein ORF85 (85 aa).

2 consecutive transmembrane segments (helical) span residues 12 to 32 (FPPTTLIVLALGSAIAYKFLS) and 44 to 64 (LGIILVFLGHGGVISTIGAGI).

The protein resides in the host membrane. The protein is Putative transmembrane protein ORF85 of Acidianus convivator (ABV).